The chain runs to 428 residues: GTPase Obg (428 aa).

An Obg domain is found at 1 to 158; it reads MFVDQTKIDV…RTLRLELKVL (158 aa). The OBG-type G domain maps to 159 to 328; it reads ADVGLVGFPS…LMGKTADLVE (170 aa). Residues 165-172, 190-194, 212-215, 282-285, and 309-311 each bind GTP; these read GFPSVGKS, FTTLT, DLPG, TQMD, and SSV. Ser172 and Thr192 together coordinate Mg(2+). Positions 350-428 constitute an OCT domain; sequence YKKPEDDGFK…IADFTFEFVD (79 aa).

The protein belongs to the TRAFAC class OBG-HflX-like GTPase superfamily. OBG GTPase family. As to quaternary structure, monomer. Mg(2+) is required as a cofactor.

The protein localises to the cytoplasm. Functionally, an essential GTPase which binds GTP, GDP and possibly (p)ppGpp with moderate affinity, with high nucleotide exchange rates and a fairly low GTP hydrolysis rate. Plays a role in control of the cell cycle, stress response, ribosome biogenesis and in those bacteria that undergo differentiation, in morphogenesis control. This Lactobacillus gasseri (strain ATCC 33323 / DSM 20243 / BCRC 14619 / CIP 102991 / JCM 1131 / KCTC 3163 / NCIMB 11718 / NCTC 13722 / AM63) protein is GTPase Obg.